The sequence spans 154 residues: 3-hydroxyacyl-[acyl-carrier-protein] dehydratase FabZ (154 aa).

Histidine 60 is an active-site residue.

This sequence belongs to the thioester dehydratase family. FabZ subfamily.

The protein resides in the cytoplasm. The enzyme catalyses a (3R)-hydroxyacyl-[ACP] = a (2E)-enoyl-[ACP] + H2O. In terms of biological role, involved in unsaturated fatty acids biosynthesis. Catalyzes the dehydration of short chain beta-hydroxyacyl-ACPs and long chain saturated and unsaturated beta-hydroxyacyl-ACPs. The polypeptide is 3-hydroxyacyl-[acyl-carrier-protein] dehydratase FabZ (Synechococcus sp. (strain CC9311)).